The sequence spans 438 residues: MAQFYSAKRRVTTRQTITVKVHDLDSFGQGVAHHNGKALFVQGALPDEVAEVSIIEDKRHFSRGVATRIVTASPQRVEPRCPHYSRCGGCQQQHASPTLQQESKAKALSRLLSKPRGETVEVDDIIASRPWGYRRRARLGLSFQPKSQTLHMGFREKSSSELVNISQCPILKPELNALLQPLHAVLSSLQAVRRLGHVELVQADSGSLLVLRHLDALTAEDRQKLERFSHQYRLSLFLAAESDTLEQVSGGMPHYQSHDLTLTFSPRDFIQVNDDVNQQMVARALAWLDLQPEDRVLDLFCGMGNFTLPMGKFAKNVVGVEGVAALVAKAGYNAELNCLNNVAFWQHNLEEDVSRQPWAVEGFNKVLLDPARAGAAGVMAHIIKIAPQRVVYVSCNPTTLARDSEILLTSGYQLERVTMLDMFPHTGHLESMVLFSRK.

One can recognise a TRAM domain in the interval 10 to 68 (RVTTRQTITVKVHDLDSFGQGVAHHNGKALFVQGALPDEVAEVSIIEDKRHFSRGVATR). Positions 81, 87, 90, and 168 each coordinate [4Fe-4S] cluster. S-adenosyl-L-methionine is bound by residues glutamine 271, phenylalanine 300, asparagine 305, glutamate 321, asparagine 348, and aspartate 369. Cysteine 395 serves as the catalytic Nucleophile.

Belongs to the class I-like SAM-binding methyltransferase superfamily. RNA M5U methyltransferase family. RlmD subfamily.

The catalysed reaction is uridine(1939) in 23S rRNA + S-adenosyl-L-methionine = 5-methyluridine(1939) in 23S rRNA + S-adenosyl-L-homocysteine + H(+). Its function is as follows. Catalyzes the formation of 5-methyl-uridine at position 1939 (m5U1939) in 23S rRNA. The protein is 23S rRNA (uracil(1939)-C(5))-methyltransferase RlmD of Erwinia tasmaniensis (strain DSM 17950 / CFBP 7177 / CIP 109463 / NCPPB 4357 / Et1/99).